The following is a 652-amino-acid chain: DNA polymerase epsilon subunit B (652 aa).

The protein belongs to the DNA polymerase epsilon subunit B family. As to quaternary structure, heterotetramer. Consists of four subunits: POL2, DPB2, DPB3 and DPB4.

It is found in the nucleus. Its function is as follows. As accessory component of the DNA polymerase epsilon (DNA polymerase II) participates in chromosomal DNA replication. This is DNA polymerase epsilon subunit B (DPB2) from Yarrowia lipolytica (strain CLIB 122 / E 150) (Yeast).